The sequence spans 363 residues: NAD(P)H-quinone oxidoreductase subunit 1, chloroplastic (363 aa).

The next 6 membrane-spanning stretches (helical) occupy residues 30 to 50 (LVPI…IVWL), 104 to 124 (IAVI…HLVL), 127 to 147 (LGIG…GLLM), 253 to 273 (FGLF…FVTV), 300 to 320 (VFGT…FLFI), and 343 to 363 (FLLP…LLSL).

This sequence belongs to the complex I subunit 1 family. In terms of assembly, NDH is composed of at least 16 different subunits, 5 of which are encoded in the nucleus.

The protein localises to the plastid. It is found in the chloroplast thylakoid membrane. The catalysed reaction is a plastoquinone + NADH + (n+1) H(+)(in) = a plastoquinol + NAD(+) + n H(+)(out). The enzyme catalyses a plastoquinone + NADPH + (n+1) H(+)(in) = a plastoquinol + NADP(+) + n H(+)(out). In terms of biological role, NDH shuttles electrons from NAD(P)H:plastoquinone, via FMN and iron-sulfur (Fe-S) centers, to quinones in the photosynthetic chain and possibly in a chloroplast respiratory chain. The immediate electron acceptor for the enzyme in this species is believed to be plastoquinone. Couples the redox reaction to proton translocation, and thus conserves the redox energy in a proton gradient. This chain is NAD(P)H-quinone oxidoreductase subunit 1, chloroplastic, found in Piper cenocladum (Ant piper).